A 360-amino-acid polypeptide reads, in one-letter code: Photosystem II protein D1 (360 aa).

The next 3 membrane-spanning stretches (helical) occupy residues 30 to 47, 119 to 134, and 143 to 157; these read YVGWFGVLMIPCLLAAAA, HFLIGISAYMGRQWEL, and WICVAYSAPVSAAFA. Position 119 (H119) interacts with chlorophyll a. Y127 provides a ligand contact to pheophytin a. The [CaMn4O5] cluster site is built by D171 and E190. The chain crosses the membrane as a helical span at residues 198-219; the sequence is FHMAGVAGMFGGSLFSAMHGSL. H199 contacts chlorophyll a. A quinone contacts are provided by residues H216 and 265–266; that span reads SF. H216 is a binding site for Fe cation. H273 contacts Fe cation. The chain crosses the membrane as a helical span at residues 275–289; sequence FLAVFPVVCVWLTSM. Residues H333, E334, D343, and A345 each contribute to the [CaMn4O5] cluster site. A propeptide spanning residues 346–360 is cleaved from the precursor; sequence AAESTTVALSAPAIG.

This sequence belongs to the reaction center PufL/M/PsbA/D family. As to quaternary structure, PSII is composed of 1 copy each of membrane proteins PsbA, PsbB, PsbC, PsbD, PsbE, PsbF, PsbH, PsbI, PsbJ, PsbK, PsbL, PsbM, PsbT, PsbX, PsbY, Psb30/Ycf12, peripheral proteins PsbO, CyanoQ (PsbQ), PsbU, PsbV and a large number of cofactors. It forms dimeric complexes. The cofactor is The D1/D2 heterodimer binds P680, chlorophylls that are the primary electron donor of PSII, and subsequent electron acceptors. It shares a non-heme iron and each subunit binds pheophytin, quinone, additional chlorophylls, carotenoids and lipids. D1 provides most of the ligands for the Mn4-Ca-O5 cluster of the oxygen-evolving complex (OEC). There is also a Cl(-1) ion associated with D1 and D2, which is required for oxygen evolution. The PSII complex binds additional chlorophylls, carotenoids and specific lipids.. Post-translationally, tyr-162 forms a radical intermediate that is referred to as redox-active TyrZ, YZ or Y-Z. In terms of processing, C-terminally processed by CtpA; processing is essential to allow assembly of the oxygen-evolving complex and thus photosynthetic growth.

Its subcellular location is the cellular thylakoid membrane. The enzyme catalyses 2 a plastoquinone + 4 hnu + 2 H2O = 2 a plastoquinol + O2. Photosystem II (PSII) is a light-driven water:plastoquinone oxidoreductase that uses light energy to abstract electrons from H(2)O, generating O(2) and a proton gradient subsequently used for ATP formation. It consists of a core antenna complex that captures photons, and an electron transfer chain that converts photonic excitation into a charge separation. The D1/D2 (PsbA/PsbD) reaction center heterodimer binds P680, the primary electron donor of PSII as well as several subsequent electron acceptors. In Prochlorococcus marinus (strain MIT 9312), this protein is Photosystem II protein D1.